Here is a 211-residue protein sequence, read N- to C-terminus: Thymidylate kinase (211 aa).

ATP is bound at residue 10 to 17 (GVEGCGKT).

The protein belongs to the thymidylate kinase family.

It carries out the reaction dTMP + ATP = dTDP + ADP. Its function is as follows. Phosphorylation of dTMP to form dTDP in both de novo and salvage pathways of dTTP synthesis. The polypeptide is Thymidylate kinase (Nostoc punctiforme (strain ATCC 29133 / PCC 73102)).